The sequence spans 206 residues: Ribosomal RNA small subunit methyltransferase G (206 aa).

S-adenosyl-L-methionine contacts are provided by residues Gly73, Leu78, 124 to 125 (VE), and Arg139.

Belongs to the methyltransferase superfamily. RNA methyltransferase RsmG family.

Its subcellular location is the cytoplasm. The catalysed reaction is guanosine(527) in 16S rRNA + S-adenosyl-L-methionine = N(7)-methylguanosine(527) in 16S rRNA + S-adenosyl-L-homocysteine. Functionally, specifically methylates the N7 position of guanine in position 527 of 16S rRNA. The polypeptide is Ribosomal RNA small subunit methyltransferase G (Sodalis glossinidius (strain morsitans)).